Reading from the N-terminus, the 264-residue chain is Cysteine-rich repeat secretory protein 26 (264 aa).

The first 27 residues, 1 to 27 (MSSNIFGSVPILVVVAIQLLLVHNVSS), serve as a signal peptide directing secretion. 2 Gnk2-homologous domains span residues 34–142 (YLNH…SVDS) and 148–261 (YKRM…LYPF).

This sequence belongs to the cysteine-rich repeat secretory protein family.

It localises to the secreted. The chain is Cysteine-rich repeat secretory protein 26 (CRRSP26) from Arabidopsis thaliana (Mouse-ear cress).